A 99-amino-acid chain; its full sequence is MAKGQSLQDPFLNALRRERVPVSIYLVNGIKLQGQIESFDQFVILLKNTVSQMVYKHAISTVVPSRPVSHHSNNPGGSNNYHGSNTTAQQQSQDADDAE.

One can recognise a Sm domain in the interval D9–V68. The tract at residues P64–E99 is disordered. A compositionally biased stretch (low complexity) spans H70 to Q93.

The protein belongs to the Hfq family. In terms of assembly, homohexamer.

RNA chaperone that binds small regulatory RNA (sRNAs) and mRNAs to facilitate mRNA translational regulation in response to envelope stress, environmental stress and changes in metabolite concentrations. Also binds with high specificity to tRNAs. The protein is RNA-binding protein Hfq of Pectobacterium atrosepticum (strain SCRI 1043 / ATCC BAA-672) (Erwinia carotovora subsp. atroseptica).